A 552-amino-acid chain; its full sequence is Esterase E4 (552 aa).

The first 23 residues, 1–23, serve as a signal peptide directing secretion; the sequence is MKNTCGILLNLFLFIGCFLTCSA. Asparagine 81 carries N-linked (GlcNAc...) asparagine glycosylation. A disulfide bridge links cysteine 89 with cysteine 106. Serine 214 acts as the Acyl-ester intermediate in catalysis. Cysteine 266 and cysteine 277 are oxidised to a cystine. Asparagine 269 carries N-linked (GlcNAc...) asparagine glycosylation. Residue glutamate 339 is the Charge relay system of the active site. N-linked (GlcNAc...) asparagine glycans are attached at residues asparagine 371, asparagine 404, and asparagine 443. Histidine 463 (charge relay system) is an active-site residue.

Belongs to the type-B carboxylesterase/lipase family.

It catalyses the reaction a carboxylic ester + H2O = an alcohol + a carboxylate + H(+). Its function is as follows. Overproduction of nonspecific esterases is a common mechanism of resistance to organophosphate insecticides. The chain is Esterase E4 from Myzus persicae (Green peach aphid).